We begin with the raw amino-acid sequence, 691 residues long: 1,4-alpha-glucan-branching enzyme (691 aa).

Positions 80 and 116 each coordinate (1,4-alpha-D-glucosyl)n. Residue Asp333 is the Nucleophile of the active site. Catalysis depends on Glu398, which acts as the Proton donor.

Belongs to the glycosyl hydrolase 13 family. GlgB subfamily.

Its subcellular location is the cytoplasm. The catalysed reaction is Transfers a segment of a (1-&gt;4)-alpha-D-glucan chain to a primary hydroxy group in a similar glucan chain.. Its pathway is glycan biosynthesis; glycogen biosynthesis. Glycogen-branching enzyme participates in the glycogen biosynthetic process along with glycogenin and glycogen synthase. Generates alpha-1,6-glucosidic branches from alpha-1,4-linked glucose chains, to increase solubility of the glycogen polymer. The protein is 1,4-alpha-glucan-branching enzyme (GLC3) of Yarrowia lipolytica (strain CLIB 122 / E 150) (Yeast).